Consider the following 243-residue polypeptide: 1-(5-phosphoribosyl)-5-[(5-phosphoribosylamino)methylideneamino] imidazole-4-carboxamide isomerase (243 aa).

The Proton acceptor role is filled by Asp-8. Residue Asp-130 is the Proton donor of the active site.

The protein belongs to the HisA/HisF family.

Its subcellular location is the cytoplasm. The catalysed reaction is 1-(5-phospho-beta-D-ribosyl)-5-[(5-phospho-beta-D-ribosylamino)methylideneamino]imidazole-4-carboxamide = 5-[(5-phospho-1-deoxy-D-ribulos-1-ylimino)methylamino]-1-(5-phospho-beta-D-ribosyl)imidazole-4-carboxamide. It participates in amino-acid biosynthesis; L-histidine biosynthesis; L-histidine from 5-phospho-alpha-D-ribose 1-diphosphate: step 4/9. This Acinetobacter baumannii (strain AB307-0294) protein is 1-(5-phosphoribosyl)-5-[(5-phosphoribosylamino)methylideneamino] imidazole-4-carboxamide isomerase.